The sequence spans 398 residues: MVQKIKAFLSQESSGGILLMLAVAMAMLLANSPLAGLYQGFLDTPVQVRFGQLDINKPLLLWVNDGLMALFFLLIGLEVKRELVEGALSSVSKASLPTFAAIGGMVFPALVYLGFNFGNEATQNGWAIPAATDIAFALGVLALLGNRVPVALKVFLLALAIIDDIGVIVIIALFYSSDLSITSLVIAAIAIGSMVILNLKGVRTLTPYALLGLLLWIAVLKSGVHATLAGVVIAFCIPLKVKPGEESPSRYLEHSLHPWSTFMILPLFAFANAGLSLSGMSLASLAEPAALGVMLGLLLGKPLGVLLFSYAAVKLKWASLPQGVNWQQISAVAVLCGVGFTMSIFISSLAFEHSAVDVGNYARLGTLVGSMLSASIAYFWLTKVLNDDKGETDENKNS.

The next 11 membrane-spanning stretches (helical) occupy residues 17-37, 59-79, 95-115, 125-145, 154-174, 179-199, 213-233, 262-282, 288-308, 331-351, and 364-384; these read ILLM…LAGL, LLLW…GLEV, SLPT…YLGF, GWAI…ALLG, VFLL…IALF, LSIT…ILNL, LLLW…GVVI, FMIL…GMSL, PAAL…VLLF, AVAV…SLAF, and LGTL…LTKV.

Belongs to the NhaA Na(+)/H(+) (TC 2.A.33) antiporter family.

The protein resides in the cell inner membrane. It carries out the reaction Na(+)(in) + 2 H(+)(out) = Na(+)(out) + 2 H(+)(in). Functionally, na(+)/H(+) antiporter that extrudes sodium in exchange for external protons. The chain is Na(+)/H(+) antiporter NhaA 2 from Shewanella denitrificans (strain OS217 / ATCC BAA-1090 / DSM 15013).